The chain runs to 124 residues: Large ribosomal subunit protein uL18 (124 aa).

The protein belongs to the universal ribosomal protein uL18 family. Part of the 50S ribosomal subunit; part of the 5S rRNA/L5/L18/L25 subcomplex. Contacts the 5S and 23S rRNAs.

In terms of biological role, this is one of the proteins that bind and probably mediate the attachment of the 5S RNA into the large ribosomal subunit, where it forms part of the central protuberance. This Frankia casuarinae (strain DSM 45818 / CECT 9043 / HFP020203 / CcI3) protein is Large ribosomal subunit protein uL18.